We begin with the raw amino-acid sequence, 217 residues long: DNA-binding transcriptional activator DevR/DosR (217 aa).

One can recognise a Response regulatory domain in the interval 3-119 (KVFLVDDHEV…ELARAVKDVG (117 aa)). Position 54 is a 4-aspartylphosphate (aspartate 54). In terms of domain architecture, HTH luxR-type spans 143–208 (KQDPLSGLTD…QAAVFATELK (66 aa)). Positions 167–186 (NKQIADRMFLAEKTVKNYVS) form a DNA-binding region, H-T-H motif. Phosphothreonine; by PknH occurs at positions 198 and 205.

As to quaternary structure, homodimer. Interacts with NarL. Phosphorylated on Asp-54 by both DevS (DosS) and DosT. Phosphorylated on Thr-198 and Thr-205 by PknH, which enhances DevR dimerization. Aspartate phosphorylation and threonine phosphorylation cooperatively enhance DevR binding to DNA.

Its subcellular location is the cytoplasm. It localises to the host cytoplasmic vesicle. The protein resides in the host phagosome. Member of the two-component regulatory system DevR/DevS (also called DosR/DosS) involved in onset of the dormancy response. Regulates an approximately 48-member regulon. When phosphorylated binds and activates the promoter of DevR regulon genes in response to hypoxia. The presence of target DNA increases stability of phospho-DevR in vitro. Activates its own transcription under hypoxic but not aerobic conditions, probably binds as a dimer to tandem binding sites within the devR and hspX promoters. Accepts a phosphate group from DevS (DosS) and from DosT. Does not regulate transcription of dosT. This is DNA-binding transcriptional activator DevR/DosR from Mycobacterium tuberculosis (strain ATCC 25618 / H37Rv).